We begin with the raw amino-acid sequence, 213 residues long: MAVFKGITPEQIESLSSGLHAGVDEVGRGPLVGNVVTAAVILDPNNPITGLNDSKKLTEKKRELLFAEIHEKALCINVGHATPDEIDELNILHATMLAMQRAVAGLDIKPLSVLVDGNRTPAFYHGEETEDRIEAHAVVKGDGLISAISAASIIAKVIRDREMDLLDMEYPQYGFAKHKGYPTKAHFEALELHGVLPEHRKSFRPVKERLAKR.

Residues 18-213 (GLHAGVDEVG…RPVKERLAKR (196 aa)) enclose the RNase H type-2 domain. Residues D24, E25, and D116 each contribute to the a divalent metal cation site.

Belongs to the RNase HII family. The cofactor is Mn(2+). Mg(2+) is required as a cofactor.

Its subcellular location is the cytoplasm. The enzyme catalyses Endonucleolytic cleavage to 5'-phosphomonoester.. Its function is as follows. Endonuclease that specifically degrades the RNA of RNA-DNA hybrids. The protein is Ribonuclease HII of Shewanella woodyi (strain ATCC 51908 / MS32).